A 102-amino-acid chain; its full sequence is Small ribosomal subunit protein uS10 (102 aa).

It belongs to the universal ribosomal protein uS10 family. In terms of assembly, part of the 30S ribosomal subunit.

Its function is as follows. Involved in the binding of tRNA to the ribosomes. In Exiguobacterium sp. (strain ATCC BAA-1283 / AT1b), this protein is Small ribosomal subunit protein uS10.